We begin with the raw amino-acid sequence, 543 residues long: Chaperonin GroEL 1 (543 aa).

ATP-binding positions include 30-33 (TLGP), K51, 87-91 (DGTTT), G415, and D496.

It belongs to the chaperonin (HSP60) family. In terms of assembly, forms a cylinder of 14 subunits composed of two heptameric rings stacked back-to-back. Interacts with the co-chaperonin GroES.

The protein resides in the cytoplasm. It carries out the reaction ATP + H2O + a folded polypeptide = ADP + phosphate + an unfolded polypeptide.. In terms of biological role, together with its co-chaperonin GroES, plays an essential role in assisting protein folding. The GroEL-GroES system forms a nano-cage that allows encapsulation of the non-native substrate proteins and provides a physical environment optimized to promote and accelerate protein folding. This is Chaperonin GroEL 1 from Roseobacter denitrificans (strain ATCC 33942 / OCh 114) (Erythrobacter sp. (strain OCh 114)).